The sequence spans 504 residues: Cytochrome P450 7A1 (504 aa).

Residues 4–24 (TSLIWGIAIAACCCLWLILGI) traverse the membrane as a helical segment. Residue Cys-444 coordinates heme.

It belongs to the cytochrome P450 family. It depends on heme as a cofactor. In terms of tissue distribution, detected in liver.

It localises to the endoplasmic reticulum membrane. Its subcellular location is the microsome membrane. It carries out the reaction cholesterol + reduced [NADPH--hemoprotein reductase] + O2 = 7alpha-hydroxycholesterol + oxidized [NADPH--hemoprotein reductase] + H2O + H(+). The catalysed reaction is 4beta-hydroxycholesterol + reduced [NADPH--hemoprotein reductase] + O2 = 4beta,7alpha-dihydroxycholesterol + oxidized [NADPH--hemoprotein reductase] + H2O + H(+). The enzyme catalyses lathosterol + reduced [NADPH--hemoprotein reductase] + O2 = 7alpha,8alpha-epoxy-5alpha-cholestan-3beta-ol + oxidized [NADPH--hemoprotein reductase] + H2O + H(+). It catalyses the reaction lathosterol + reduced [NADPH--hemoprotein reductase] + O2 = 5alpha-cholestan-7-oxo-3beta-ol + oxidized [NADPH--hemoprotein reductase] + H2O + H(+). It carries out the reaction 7-dehydrocholesterol + reduced [NADPH--hemoprotein reductase] + O2 = 7-oxocholesterol + oxidized [NADPH--hemoprotein reductase] + H2O + H(+). The catalysed reaction is (24S)-hydroxycholesterol + reduced [NADPH--hemoprotein reductase] + O2 = (24S)-7alpha-dihydroxycholesterol + oxidized [NADPH--hemoprotein reductase] + H2O + H(+). The enzyme catalyses (24R)-hydroxycholesterol + reduced [NADPH--hemoprotein reductase] + O2 = (24R)-7alpha-dihydroxycholesterol + oxidized [NADPH--hemoprotein reductase] + H2O + H(+). Its pathway is lipid metabolism; bile acid biosynthesis. The protein operates within steroid metabolism; cholesterol degradation. In terms of biological role, a cytochrome P450 monooxygenase involved in the metabolism of endogenous cholesterol and its oxygenated derivatives (oxysterols). Mechanistically, uses molecular oxygen inserting one oxygen atom into a substrate, and reducing the second into a water molecule, with two electrons provided by NADPH via cytochrome P450 reductase (CPR; NADPH-ferrihemoprotein reductase). Functions as a critical regulatory enzyme of bile acid biosynthesis and cholesterol homeostasis. Catalyzes the hydroxylation of carbon hydrogen bond at 7-alpha position of cholesterol, a rate-limiting step in cholesterol catabolism and bile acid biosynthesis. 7-alpha hydroxylates several oxysterols, including 4beta-hydroxycholesterol and 24-hydroxycholesterol. Catalyzes the oxidation of the 7,8 double bond of 7-dehydrocholesterol and lathosterol with direct and predominant formation of the 7-keto derivatives. The sequence is that of Cytochrome P450 7A1 from Homo sapiens (Human).